Here is a 271-residue protein sequence, read N- to C-terminus: Sedoheptulose 1,7-bisphosphatase (271 aa).

Residue Arg-12 participates in substrate binding. The active-site Tele-phosphohistidine intermediate is His-13. Residues 24–25 (YT), Arg-69, 99–102 (EWEY), Arg-181, and His-244 each bind substrate. The active-site Proton donor/acceptor is Glu-99.

The protein belongs to the phosphoglycerate mutase family. SHB17 subfamily. As to quaternary structure, homodimer.

It is found in the cytoplasm. The protein localises to the nucleus. The enzyme catalyses D-sedoheptulose 1,7-bisphosphate + H2O = D-sedoheptulose 7-phosphate + phosphate. Sedoheptulose 1,7-bisphosphatase involved in riboneogenesis. Dephosphorylates sedoheptulose 1,7-bisphosphate (SBP), which is converted via the non-oxidative pentose phosphate pathway to ribose-5-phosphate. Has a fructose 1,6-bisphosphatase activity in vitro, but this is probably not biologically relevant, since deletion does not affect fructose 1,6-biphosphate (FBP) levels. In Saccharomyces cerevisiae (strain ATCC 204508 / S288c) (Baker's yeast), this protein is Sedoheptulose 1,7-bisphosphatase (SHB17).